A 796-amino-acid polypeptide reads, in one-letter code: Protein tyrosine phosphatase domain-containing protein 1 (796 aa).

A Tyrosine-protein phosphatase domain is found at 126–297; the sequence is YSSWVTDNIL…LIPLRNIFSC (172 aa). Cys-234 (phosphocysteine intermediate) is an active-site residue. A phosphoserine mark is found at Ser-435 and Ser-437.

Belongs to the protein-tyrosine phosphatase family. Non-receptor class PTPDC1 subfamily.

Functionally, may play roles in cilia formation and/or maintenance. In Bos taurus (Bovine), this protein is Protein tyrosine phosphatase domain-containing protein 1 (PTPDC1).